The following is a 369-amino-acid chain: Glutamate 5-kinase (369 aa).

Lysine 9 is a binding site for ATP. Positions 49, 136, and 148 each coordinate substrate. ATP is bound by residues 168-169 (TD) and 210-216 (TGGMLTK). The region spanning 275–355 (RGGVYVDEGA…KGVFIHRDDW (81 aa)) is the PUA domain.

It belongs to the glutamate 5-kinase family.

It localises to the cytoplasm. The enzyme catalyses L-glutamate + ATP = L-glutamyl 5-phosphate + ADP. It participates in amino-acid biosynthesis; L-proline biosynthesis; L-glutamate 5-semialdehyde from L-glutamate: step 1/2. In terms of biological role, catalyzes the transfer of a phosphate group to glutamate to form L-glutamate 5-phosphate. The polypeptide is Glutamate 5-kinase (Neisseria meningitidis serogroup A / serotype 4A (strain DSM 15465 / Z2491)).